The following is an 817-amino-acid chain: ABC transporter G family member STR (817 aa).

The segment at 1 to 30 is disordered; it reads MARLERDGTNKSLESLMDSHKPGGTTTNLN. Residues 1–542 are Cytoplasmic-facing; that stretch reads MARLERDGTN…RTVLNVIRTP (542 aa). One can recognise an ABC transporter domain in the interval 43–294; the sequence is LEFTNLSYSI…LSGFGRPVPD (252 aa). 87-94 contacts ATP; that stretch reads GPSGAGKS. Disordered stretches follow at residues 321–349, 362–395, and 439–463; these read QYQHDGHKPDPAAMTPVPKPPRTPYRRNT, GFTAGTPQPDSSQFGLDDDDNDDDENFDNSLERR, and RPPSWTPARTPGWTPGKTPLSGPRS. Positions 362 to 375 are enriched in polar residues; the sequence is GFTAGTPQPDSSQF. Over residues 377–388 the composition is skewed to acidic residues; that stretch reads LDDDDNDDDENF. Residues 543–563 form a helical membrane-spanning segment; the sequence is ELFASREIVLTVMALVLSTIF. Topologically, residues 564 to 579 are extracellular; the sequence is KNLGDTTFIDINRLLN. Residues 580–600 traverse the membrane as a helical segment; the sequence is FYIFAVCLVFFSSNDAVPSFI. At 601–621 the chain is on the cytoplasmic side; that stretch reads MERFIFIRETSHNAYRASSYV. The helical transmembrane segment at 622-642 threads the bilayer; sequence ISSLIVYLPFFAVQGLTFAVI. Residues 643-657 lie on the Extracellular side of the membrane; sequence TKLMLHLKSNLFNFW. The chain crosses the membrane as a helical span at residues 658–678; the sequence is MILFASLITTNAYVMLVSALV. Residues 679 to 681 lie on the Cytoplasmic side of the membrane; sequence PSY. The chain crosses the membrane as a helical span at residues 682–702; the sequence is ITGYAVVIATTALFFLTCGFF. At 703–787 the chain is on the extracellular side; that stretch reads LKRTQIPAYW…TMDITMESLW (85 aa). Asn-762 carries an N-linked (GlcNAc...) asparagine glycan. The chain crosses the membrane as a helical span at residues 788–808; sequence YDILILLAWGVLYRFFFYLVL. The Cytoplasmic segment spans residues 809–817; sequence RFYSKNERK.

Belongs to the ABC transporter superfamily. ABCG family. Stunted arbuscule (STR) subfamily. In terms of assembly, heterodimerizes with STR2; the resulting transporter is located in the peri-arbuscular membrane. As to expression, expressed constitutively in the vascular tissue of roots.

Its subcellular location is the cell membrane. In terms of biological role, together with STR2, required for arbuscule development in arbuscular mycorrhizal (AM) symbiosis. The sequence is that of ABC transporter G family member STR from Medicago truncatula (Barrel medic).